The primary structure comprises 320 residues: Histidine decarboxylase proenzyme (320 aa).

The propeptide occupies 2–11 (NKNLEANRNR). Pyruvic acid (Ser) is present on Ser-98. The active-site Proton donor is Glu-215.

In terms of assembly, the proenzyme is a hexamer of identical pi chains; each pi chain monomer is cleaved to form a small (or beta) chain and a large (or alpha) chain by non-hydrolytic self-catalysis. It depends on pyruvate as a cofactor.

The catalysed reaction is L-histidine + H(+) = histamine + CO2. This is Histidine decarboxylase proenzyme (hdc) from Clostridium perfringens (strain ATCC 13124 / DSM 756 / JCM 1290 / NCIMB 6125 / NCTC 8237 / Type A).